Consider the following 144-residue polypeptide: Large ribosomal subunit protein bL31c (144 aa).

The transit peptide at 1–48 (MAVSLPNSFLQISPCVPSLQLRKPVMAAVKGGKQSVRRSSNTVVQITC) directs the protein to the chloroplast.

Belongs to the bacterial ribosomal protein bL31 family. Type A subfamily. Part of the 50S ribosomal subunit.

It is found in the plastid. The protein resides in the chloroplast. Functionally, binds the 23S rRNA. This is Large ribosomal subunit protein bL31c (RPL31) from Arabidopsis thaliana (Mouse-ear cress).